We begin with the raw amino-acid sequence, 78 residues long: Large ribosomal subunit protein bL31 (78 aa).

Belongs to the bacterial ribosomal protein bL31 family. Type A subfamily. Part of the 50S ribosomal subunit.

In terms of biological role, binds the 23S rRNA. This Rickettsia felis (strain ATCC VR-1525 / URRWXCal2) (Rickettsia azadi) protein is Large ribosomal subunit protein bL31 (rpmE).